Reading from the N-terminus, the 112-residue chain is uncharacterized protein (112 aa).

Transmembrane regions (helical) follow at residues 44 to 63 (VITGIVGYVFVVVYVVLHSL) and 68 to 90 (LAALAMALVFFAITGEYGGKLVH).

Its subcellular location is the cell membrane. This is an uncharacterized protein from Archaeoglobus fulgidus (strain ATCC 49558 / DSM 4304 / JCM 9628 / NBRC 100126 / VC-16).